Reading from the N-terminus, the 396-residue chain is Agropine synthesis cyclase (396 aa).

Belongs to the peptidase M24B family.

In Rhizobium rhizogenes (Agrobacterium rhizogenes), this protein is Agropine synthesis cyclase (ags).